Here is a 50-residue protein sequence, read N- to C-terminus: Protein hunchback (50 aa).

C2H2-type zinc fingers lie at residues 1–5, 11–33, and 39–50; these read HLRNH, FKCN…MKSH, and YRCADCTYATKY.

This sequence belongs to the hunchback C2H2-type zinc-finger protein family.

The protein localises to the nucleus. Functionally, gap class segmentation protein that controls development of head structures. This Platynereis dumerilii (Dumeril's clam worm) protein is Protein hunchback (hb).